We begin with the raw amino-acid sequence, 139 residues long: Large ribosomal subunit protein uL16 (139 aa).

The protein belongs to the universal ribosomal protein uL16 family. As to quaternary structure, part of the 50S ribosomal subunit.

Its function is as follows. Binds 23S rRNA and is also seen to make contacts with the A and possibly P site tRNAs. This is Large ribosomal subunit protein uL16 from Chlorobium chlorochromatii (strain CaD3).